The chain runs to 61 residues: MSQKKVTVRQVGSPIGRKPEQRQTLQGLGLNKIGRTSELEDTPAVRGMIRKVSHLVEVVGE.

Residues 1–20 (MSQKKVTVRQVGSPIGRKPE) form a disordered region.

Belongs to the universal ribosomal protein uL30 family. Part of the 50S ribosomal subunit.

In Hyphomonas neptunium (strain ATCC 15444), this protein is Large ribosomal subunit protein uL30.